Here is a 1193-residue protein sequence, read N- to C-terminus: DNA polymerase (1193 aa).

Residues 1–88 (MALVQTHGSR…PAKKKRGTVV (88 aa)) are disordered. Positions 48–68 (PATTASGSRAAPTARRASSPP) are enriched in low complexity.

This sequence belongs to the DNA polymerase type-B family. Heterodimer with the terminal protein; this heterodimer binds to bp 9 to 18 of the genome. Forms a complex with viral pTP, DBP and hosts NFIA and POU2F1/OCT1 for initiation of replication.

Its subcellular location is the host nucleus. It carries out the reaction DNA(n) + a 2'-deoxyribonucleoside 5'-triphosphate = DNA(n+1) + diphosphate. In terms of biological role, eukaryotic-type DNA polymerase involved in viral genomic replication. DNA synthesis is protein primed, and acts in a strand displacement replication. Assembles in complex with viral pTP, DBP, host NFIA and host POU2F1/OCT1 on viral origin of replication. The polymerase covalently transfers dCMP onto pTP, thereby initiating complementary strand synthesis. This is DNA polymerase from Homo sapiens (Human).